The chain runs to 461 residues: MKTTVVYLVILCLIVSCTNGETKHVRKINSDGSEAWGYVEVRPKAHMFWWHYKSPYRVENPSKPWPIILWLQGGPGASGVGIGNFQEVGPLDTFLKPRNSTWLKKADLLFVDSPVGAGYSFVEGNQKDLYVKSDEEAAQDLTKLLQQLFNKNQTLNQSPLFIVAESYGGKIAVKLGLSVIDAVQSGKLKLHLGGVILGDSWISPEDFVFSWGPLLKHVSRLDDNGLDSSNSLAEKIKTQIKNGEYVGATQTWMDLENLISSKSNFVDFYNFLLDTGMDPVSLTTSLKIKKEEKIKKYSRYLNDMRSLSDVEDVEGDLDKLMNGVIKKKLKIIPNDLIWGNNSDDVFTAMEAAFMKPVIEDVDELLATGVDVTIYNGQLDVICSTSGTEAWVHKLRWEGLEEFKKMEREPLFCESDRATRGFTKSYKNLHFYWILGAGHFVPVDEPCVALKMVGEITKSPQL.

The N-terminal stretch at 1 to 20 is a signal peptide; that stretch reads MKTTVVYLVILCLIVSCTNG. Asn99 and Asn152 each carry an N-linked (GlcNAc...) asparagine glycan. Residue Ser166 is part of the active site. Asn340 carries N-linked (GlcNAc...) asparagine glycosylation. Residues Asp379 and His438 contribute to the active site.

It belongs to the peptidase S10 family. As to expression, expressed in seedlings, roots, flowers and siliques.

It is found in the secreted. Functionally, probable carboxypeptidase. This is Serine carboxypeptidase-like 51 (SCPL51) from Arabidopsis thaliana (Mouse-ear cress).